We begin with the raw amino-acid sequence, 252 residues long: Imidazole glycerol phosphate synthase subunit HisF (252 aa).

Catalysis depends on residues Asp11 and Asp130.

Belongs to the HisA/HisF family. In terms of assembly, heterodimer of HisH and HisF.

The protein localises to the cytoplasm. It carries out the reaction 5-[(5-phospho-1-deoxy-D-ribulos-1-ylimino)methylamino]-1-(5-phospho-beta-D-ribosyl)imidazole-4-carboxamide + L-glutamine = D-erythro-1-(imidazol-4-yl)glycerol 3-phosphate + 5-amino-1-(5-phospho-beta-D-ribosyl)imidazole-4-carboxamide + L-glutamate + H(+). Its pathway is amino-acid biosynthesis; L-histidine biosynthesis; L-histidine from 5-phospho-alpha-D-ribose 1-diphosphate: step 5/9. Its function is as follows. IGPS catalyzes the conversion of PRFAR and glutamine to IGP, AICAR and glutamate. The HisF subunit catalyzes the cyclization activity that produces IGP and AICAR from PRFAR using the ammonia provided by the HisH subunit. The polypeptide is Imidazole glycerol phosphate synthase subunit HisF (Alkaliphilus metalliredigens (strain QYMF)).